Consider the following 252-residue polypeptide: 3-dehydroquinate dehydratase (252 aa).

Residues 46 to 48 and R82 contribute to the 3-dehydroquinate site; that span reads EWR. H143 serves as the catalytic Proton donor/acceptor. K170 (schiff-base intermediate with substrate) is an active-site residue. 3-dehydroquinate contacts are provided by R212, S231, and Q235.

The protein belongs to the type-I 3-dehydroquinase family. Homodimer.

It carries out the reaction 3-dehydroquinate = 3-dehydroshikimate + H2O. Its pathway is metabolic intermediate biosynthesis; chorismate biosynthesis; chorismate from D-erythrose 4-phosphate and phosphoenolpyruvate: step 3/7. In terms of biological role, involved in the third step of the chorismate pathway, which leads to the biosynthesis of aromatic amino acids. Catalyzes the cis-dehydration of 3-dehydroquinate (DHQ) and introduces the first double bond of the aromatic ring to yield 3-dehydroshikimate. In Listeria monocytogenes serotype 4b (strain F2365), this protein is 3-dehydroquinate dehydratase.